The following is a 294-amino-acid chain: Peroxidase-like protein 3 (294 aa).

The N-linked (GlcNAc...) asparagine glycan is linked to Asn129.

Belongs to the peroxidase family. In terms of tissue distribution, component of the acid-insoluble and acid-soluble organic matrix of calcified layers of the shell (at protein level).

The protein localises to the secreted. The polypeptide is Peroxidase-like protein 3 (Lottia gigantea (Giant owl limpet)).